We begin with the raw amino-acid sequence, 817 residues long: Two pore calcium channel protein 1 (817 aa).

The Cytoplasmic portion of the chain corresponds to Met-1–Glu-113. Residues Ser-20–Gly-65 form a disordered region. The span at Ser-26 to Ser-51 shows a compositional bias: polar residues. The helical transmembrane segment at Leu-114 to Leu-134 threads the bilayer. Topologically, residues Lys-135–His-137 are extracellular. A helical membrane pass occupies residues Thr-138–Met-158. Over Lys-159–Lys-172 the chain is Cytoplasmic. The helical transmembrane segment at Arg-173–Val-193 threads the bilayer. The Extracellular segment spans residues Arg-194–Thr-202. Residues Arg-203–Arg-221 traverse the membrane as a helical segment. Over Asn-222–Asp-235 the chain is Cytoplasmic. Residues Ile-236–Ser-256 traverse the membrane as a helical segment. The Extracellular portion of the chain corresponds to Thr-257 to Tyr-263. The helical; Pore-forming intramembrane region spans Phe-264–Met-287. Over Met-288–Cys-298 the chain is Extracellular. A helical membrane pass occupies residues Val-299 to Val-319. Residues Val-320–Gln-445 are Cytoplasmic-facing. The helical transmembrane segment at Tyr-446–Leu-466 threads the bilayer. Topologically, residues Lys-467 to Tyr-480 are extracellular. A glycan (N-linked (GlcNAc...) asparagine) is linked at Asn-470. The helical transmembrane segment at Leu-481 to Val-501 threads the bilayer. The Cytoplasmic segment spans residues Glu-502–Leu-504. A helical transmembrane segment spans residues Ser-505–Thr-527. Residues Leu-528–Phe-535 are Extracellular-facing. A helical transmembrane segment spans residues Ile-536–Leu-550. At Lys-551–Ala-569 the chain is on the cytoplasmic side. The helical transmembrane segment at Ser-570–Phe-590 threads the bilayer. The Extracellular portion of the chain corresponds to Asn-591–Asn-630. The helical; Pore-forming intramembrane region spans Phe-631 to Met-654. The Extracellular portion of the chain corresponds to Glu-655 to Thr-671. A helical transmembrane segment spans residues Phe-672–Val-692. Over Phe-693–Thr-817 the chain is Cytoplasmic. Positions Ser-770–Leu-794 form a coiled coil. A disordered region spans residues His-785–Thr-817. The segment covering Pro-806–Thr-817 has biased composition (polar residues).

The protein belongs to the calcium channel alpha-1 subunit (TC 1.A.1.11) family. Two pore calcium channel subfamily. Dimer. Interacts with MTOR; the interaction is required for TPCN1 ATP sensitivity. Interacts with STX7, STX8 and STX12. Interacts with JPT2. Found in a complex with LSM12, TPCN1 and TPCN2. Post-translationally, N-glycosylated. Mainly expressed in epithelial tissues like lung, kidney, colon, spleen and liver (at protein level).

It is found in the lysosome membrane. It localises to the endosome membrane. The protein localises to the early endosome membrane. The protein resides in the recycling endosome membrane. The enzyme catalyses Na(+)(in) = Na(+)(out). It carries out the reaction Ca(2+)(in) = Ca(2+)(out). Its activity is regulated as follows. Na(+) current is inhibited by ATP in a MTORC-dependent manner. ATP sensitivity is independent of PI(3,5)P2. Probably regulated by Mg(2+) ions, cytosolic Mg(2+) selectively inhibits outward current while lysosomal Mg(2+) modestly inhibits both the outward and inward currents. In the absence of Mg(2+), NAADP readily activates TPCN2, with properties similar to PI(3,5)P2. Both current elicited by PI(3,5)P2 as well as NAADP are inhibited by tetrandrine. Intracellular channel initially characterized as a non-selective Ca(2+)-permeable channel activated by NAADP (nicotinic acid adenine dinucleotide phosphate), it is also a voltage-gated highly-selective Na(+) channel activated directly by PI(3,5)P2 (phosphatidylinositol 3,5-bisphosphate) that senses pH changes and confers electrical excitability to organelles. Localizes to the early and recycling endosomes membranes where it plays a role in the uptake and processing of proteins and regulates organellar membrane excitability, membrane trafficking and pH homeostasis. Ion selectivity is not fixed but rather agonist-dependent and under defined ionic conditions, can be readily activated by both NAADP and PI(3,5)P2. Required for mTOR-dependent nutrient sensing. This is Two pore calcium channel protein 1 from Mus musculus (Mouse).